The sequence spans 992 residues: Disks large-associated protein 4 (992 aa).

Residues 1–20 (MKGLGDSRPRHLSDSLDPPH) show a composition bias toward basic and acidic residues. 3 disordered regions span residues 1-30 (MKGL…TDRN), 47-66 (PGQN…QLPP), and 157-206 (LEGT…GWWS). Residues 162-171 (GKVGGNGSKK) are compositionally biased toward gly residues. Positions 172-194 (GGMEDGKGRRAKSKERAKAGEPK) are enriched in basic and acidic residues. 2 positions are modified to phosphoserine: Ser206 and Ser207. Arg291 bears the Omega-N-methylarginine mark. The disordered stretch occupies residues 342–396 (STTLLSPRETDAAAEGPIPCRRMRSGSYIKAMGDEDSDESGGSPKPSPKTAARRQ). Phosphoserine occurs at positions 378, 381, 388, 405, 415, and 421. 3 disordered regions span residues 527–751 (SVSL…GPRQ), 763–798 (SYGD…AQPG), and 915–992 (TPEK…QTRL). Residues 528 to 554 (VSLQSLSPPPSTGSLSNSRTLPSSSCL) show a composition bias toward low complexity. A compositionally biased stretch (polar residues) spans 576 to 591 (VTVQSSTESAQDTYLD). A phosphoserine mark is found at Ser580, Ser581, Ser609, Ser611, Ser665, and Ser744. Over residues 600 to 620 (TSQSGLSNSSDSLDSSTRPPS) the composition is skewed to low complexity. Thr915 carries the post-translational modification Phosphothreonine. Basic and acidic residues-rich tracts occupy residues 915–925 (TPEKRKEEKKP) and 940–958 (VSRD…EARK). Over residues 969 to 978 (VRQNSATESA) the composition is skewed to polar residues. Ser973 bears the Phosphoserine mark.

Belongs to the SAPAP family. In terms of assembly, interacts with DLG1 and DLG4/PSD-95.

It localises to the membrane. In terms of biological role, may play a role in the molecular organization of synapses and neuronal cell signaling. Could be an adapter protein linking ion channel to the subsynaptic cytoskeleton. May induce enrichment of PSD-95/SAP90 at the plasma membrane. This is Disks large-associated protein 4 (DLGAP4) from Homo sapiens (Human).